The chain runs to 139 residues: MLQPKRTKYRKPFLQSHDKRKAHKGNKVSFGSHGLQAVTSAWVDSRQIESARIAATRSLGREGNVIIRIFPHFSKTSKPIGVRMGSGKGSPEKWYTPVKVNTVVFEIQGVSAERAKEALRLAGHKLPVKWKIIEKEGVN.

The segment covering 1–11 (MLQPKRTKYRK) has biased composition (basic residues). Residues 1-30 (MLQPKRTKYRKPFLQSHDKRKAHKGNKVSF) form a disordered region.

It belongs to the universal ribosomal protein uL16 family. In terms of assembly, part of the 50S ribosomal subunit.

Binds 23S rRNA and is also seen to make contacts with the A and possibly P site tRNAs. This is Large ribosomal subunit protein uL16 from Mycoplasmopsis synoviae (strain 53) (Mycoplasma synoviae).